Consider the following 544-residue polypeptide: Chaperonin GroEL (544 aa).

Residues threonine 30–proline 33, lysine 51, aspartate 87–threonine 91, glycine 415, asparagine 478–alanine 480, and aspartate 494 contribute to the ATP site.

The protein belongs to the chaperonin (HSP60) family. Forms a cylinder of 14 subunits composed of two heptameric rings stacked back-to-back. Interacts with the co-chaperonin GroES.

The protein resides in the cytoplasm. It catalyses the reaction ATP + H2O + a folded polypeptide = ADP + phosphate + an unfolded polypeptide.. In terms of biological role, together with its co-chaperonin GroES, plays an essential role in assisting protein folding. The GroEL-GroES system forms a nano-cage that allows encapsulation of the non-native substrate proteins and provides a physical environment optimized to promote and accelerate protein folding. The polypeptide is Chaperonin GroEL (Geobacter sulfurreducens (strain ATCC 51573 / DSM 12127 / PCA)).